Reading from the N-terminus, the 272-residue chain is Shikimate dehydrogenase (NADP(+)) (272 aa).

Residues 14–16 and Thr-61 each bind shikimate; that span reads SKS. The Proton acceptor role is filled by Lys-65. An NADP(+)-binding site is contributed by Glu-77. Shikimate is bound by residues Asn-86 and Asp-102. NADP(+) is bound by residues 126-130, 149-154, and Met-212; these read GAGGA and NRTADK. Residue Tyr-214 coordinates shikimate. Gly-237 is a binding site for NADP(+).

This sequence belongs to the shikimate dehydrogenase family. In terms of assembly, homodimer.

The enzyme catalyses shikimate + NADP(+) = 3-dehydroshikimate + NADPH + H(+). It participates in metabolic intermediate biosynthesis; chorismate biosynthesis; chorismate from D-erythrose 4-phosphate and phosphoenolpyruvate: step 4/7. Its function is as follows. Involved in the biosynthesis of the chorismate, which leads to the biosynthesis of aromatic amino acids. Catalyzes the reversible NADPH linked reduction of 3-dehydroshikimate (DHSA) to yield shikimate (SA). In Glaesserella parasuis serovar 5 (strain SH0165) (Haemophilus parasuis), this protein is Shikimate dehydrogenase (NADP(+)).